The primary structure comprises 445 residues: N-succinylarginine dihydrolase (445 aa).

Residues 19-28 (AGLSFGNVAS), Asn-110, and 137-138 (HR) contribute to the substrate site. Glu-174 is a catalytic residue. A substrate-binding site is contributed by Arg-214. His-250 is a catalytic residue. Substrate contacts are provided by Asp-252 and Asn-363. The active-site Nucleophile is Cys-369.

This sequence belongs to the succinylarginine dihydrolase family. As to quaternary structure, homodimer.

The catalysed reaction is N(2)-succinyl-L-arginine + 2 H2O + 2 H(+) = N(2)-succinyl-L-ornithine + 2 NH4(+) + CO2. It functions in the pathway amino-acid degradation; L-arginine degradation via AST pathway; L-glutamate and succinate from L-arginine: step 2/5. Functionally, catalyzes the hydrolysis of N(2)-succinylarginine into N(2)-succinylornithine, ammonia and CO(2). The protein is N-succinylarginine dihydrolase of Shewanella piezotolerans (strain WP3 / JCM 13877).